Consider the following 863-residue polypeptide: Potassium/sodium hyperpolarization-activated cyclic nucleotide-gated channel 2 (863 aa).

Over residues 1-10 (MDARGGGGRP) the composition is skewed to gly residues. The disordered stretch occupies residues 1–131 (MDARGGGGRP…AGPAGEPRGS (131 aa)). Residues 1–188 (MDARGGGGRP…PYSDFRFYWD (188 aa)) lie on the Cytoplasmic side of the membrane. A compositionally biased stretch (pro residues) spans 17 to 47 (TPAPGPPPPPPPPAPPQPQPPPAPPPNPTTP). Residues 106-128 (GAASGPAAAEEAGSEEAGPAGEP) show a composition bias toward low complexity. Phosphoserine occurs at positions 119 and 134. An involved in subunit assembly region spans residues 131–182 (SQASFLQRQFGALLQPGVNKFSLRMFGSQKAVEREQERVKSAGAWIIHPYSD). The chain crosses the membrane as a helical span at residues 189–209 (FTMLLFMVGNLIIIPVGITFF). Residues 210-213 (KDET) are Extracellular-facing. Residues 214–234 (TAPWIVFNVVSDTFFLMDLVL) form a helical membrane-spanning segment. The Cytoplasmic segment spans residues 235–261 (NFRTGIVIEDNTEIILDPEKIKKKYLR). The helical transmembrane segment at 262-282 (TWFVVDFVSSIPVDYIFLIVE) threads the bilayer. Residues 283 to 290 (KGIDSEVY) lie on the Extracellular side of the membrane. Residues 291–311 (KTARALRIVRFTKILSLLRLL) form a helical; Voltage-sensor membrane-spanning segment. Residues 312-342 (RLSRLIRYIHQWEEIFHMTYDLASAVMRICN) lie on the Cytoplasmic side of the membrane. Residues 343–363 (LISMMLLLCHWDGCLQFLVPM) form a helical membrane-spanning segment. The Extracellular segment spans residues 364–386 (LQDFPSDCWVSINNMVNHSWSEL). An N-linked (GlcNAc...) asparagine glycan is attached at Asn380. The segment at residues 387–408 (YSFALFKAMSHMLCIGYGRQAP) is an intramembrane region (pore-forming). Over 409–413 (ESMTD) the chain is Extracellular. A helical transmembrane segment spans residues 414–434 (IWLTMLSMIVGATCYAMFIGH). Over 435–863 (ATALIQSLDS…SARSRLSSNL (429 aa)) the chain is Cytoplasmic. Residues Gly581, Glu582, Cys584, Arg591, Thr592, and Arg632 each contribute to the 3',5'-cyclic AMP site. At Ser641 the chain carries Phosphoserine; by PKG/PRKG2. Phosphoserine is present on Ser726. Residue Arg728 is modified to Omega-N-methylarginine. The tract at residues 730–863 (VRRAPPGPLP…SARSRLSSNL (134 aa)) is disordered. The segment covering 734-755 (PPGPLPPAASPGPPAASPPAAP) has biased composition (pro residues). A phosphoserine mark is found at Ser743, Ser750, and Ser757. Composition is skewed to low complexity over residues 756 to 765 (SSPRAPRTSP) and 778 to 834 (PALP…AAPS). A phosphoserine mark is found at Ser840, Ser842, and Ser847.

This sequence belongs to the potassium channel HCN family. As to quaternary structure, homotetramer. The channel is composed of a homo- or heterotetrameric complex of pore-forming subunits. Heterotetramer with HCN1. Forms an obligate 4:4 complex with accessory subunit PEX5L. Interacts with KCNE2. Post-translationally, phosphorylation at Ser-641 by PRKG2 shifts the voltage-dependence to more negative voltages, hence counteracting the stimulatory effect of cGMP on gating. In terms of processing, N-glycosylated; required for cell surface trafficking of HCN2. S-palmitoylated. Highly expressed in neonatal and adult ventricle and in brain. Highly expressed in the pyramidal layer in hippocampus, in anterior dorsal nucleus in thalamus, in the mammillary nucleus in hypothalamus, in red nucleus, in trigeminal mesencephalic, spinal and principal nuclei, in cochlear and trapezoid nuclei and in the dorsal tegemental nucleus.

The protein localises to the cell membrane. The catalysed reaction is Na(+)(in) = Na(+)(out). The enzyme catalyses K(+)(in) = K(+)(out). It carries out the reaction NH4(+)(in) = NH4(+)(out). Its activity is regulated as follows. Activated by cAMP, and at 10-100 times higher concentrations, also by cGMP. cAMP binding causes a conformation change that leads to the assembly of an active tetramer and channel opening. In the absence of cAMP, the C-terminal region is thought to exert a tonic inhibition on the pore when HCN2 is in a non-tetrameric form. Channel activity is modulated by intracellular chloride ions and pH; acidic pH shifts the activation to more negative voltages. Phosphatidylinositol-4,5- bisphosphate (PIP(2)) acts as a ligand that allosterically opens HCN2 by shifting voltage-dependent channel activation toward depolarized potentials. Inhibited by extracellular cesium ions. Functionally, hyperpolarization-activated ion channel exhibiting weak selectivity for potassium over sodium ions. Contributes to the native pacemaker currents in heart (If) and in neurons (Ih). Can also transport ammonium in the distal nephron. Involved in the initiation of neuropathic pain in sensory neurons. Produces a large instantaneous current. The chain is Potassium/sodium hyperpolarization-activated cyclic nucleotide-gated channel 2 (Hcn2) from Rattus norvegicus (Rat).